The following is a 162-amino-acid chain: Caveolin-2 (162 aa).

At 1 to 86 the chain is on the cytoplasmic side; sequence MGLETEKADV…FEISKYVLYK (86 aa). At Tyr19 the chain carries Phosphotyrosine; by SRC. Ser20 and Ser23 each carry phosphoserine. Residues 87 to 107 constitute an intramembrane region (helical); sequence FLTVFLAIPLAFAAGVLFAVL. Residues 108–162 are Cytoplasmic-facing; it reads SCLHIWILMPFVKTCLMVLPSVQTIWRSVTDVVIAPLCASIGRSFSSVGLQLSHD.

This sequence belongs to the caveolin family. As to quaternary structure, monomer or homodimer. Interacts with CAV1; the interaction forms a stable heterooligomeric complex that is required for targeting to lipid rafts and for caveolae formation. Tyrosine phosphorylated forms do not form heterooligomers with the Tyr-19-phosphorylated form existing as a monomer or dimer. Interacts (tyrosine phosphorylated form) with the SH2 domain-containing proteins, RASA1, NCK1 and SRC. Interacts (tyrosine phosphorylated form) with INSR. Interacts (Tyr-19 phosphorylated form) with MAPK1 (phosphorylated form); the interaction, promoted by insulin, leads to nuclear location and MAPK1 activation. Interacts with STAT3; the interaction is increased on insulin-induced tyrosine phosphorylation leading to STAT activation. Post-translationally, phosphorylated on serine and tyrosine residues. CAV1 promotes phosphorylation on Ser-23 which then targets the complex to the plasma membrane, lipid rafts and caveolae. Phosphorylation on Tyr-19 is required for insulin-induced phosphorylation of MAPK1 and DNA binding of STAT3. Tyrosine phosphorylation is induced by both EGF and insulin.

It localises to the nucleus. The protein resides in the cytoplasm. Its subcellular location is the golgi apparatus membrane. It is found in the cell membrane. The protein localises to the membrane. It localises to the caveola. In terms of biological role, may act as a scaffolding protein within caveolar membranes. Interacts directly with G-protein alpha subunits and can functionally regulate their activity. Acts as an accessory protein in conjunction with CAV1 in targeting to lipid rafts and driving caveolae formation. Positive regulator of cellular mitogenesis of the MAPK signaling pathway. Required for the insulin-stimulated nuclear translocation and activation of MAPK1 and STAT3, and the subsequent regulation of cell cycle progression. The protein is Caveolin-2 (CAV2) of Oryctolagus cuniculus (Rabbit).